The chain runs to 145 residues: Aspartate 1-decarboxylase (145 aa).

Ser-26 functions as the Schiff-base intermediate with substrate; via pyruvic acid in the catalytic mechanism. The residue at position 26 (Ser-26) is a Pyruvic acid (Ser). Substrate is bound at residue Thr-58. Tyr-59 serves as the catalytic Proton donor. A substrate-binding site is contributed by 74-76; sequence GGA.

This sequence belongs to the PanD family. As to quaternary structure, heterooctamer of four alpha and four beta subunits. The cofactor is pyruvate. Post-translationally, is synthesized initially as an inactive proenzyme, which is activated by self-cleavage at a specific serine bond to produce a beta-subunit with a hydroxyl group at its C-terminus and an alpha-subunit with a pyruvoyl group at its N-terminus.

The protein resides in the cytoplasm. The enzyme catalyses L-aspartate + H(+) = beta-alanine + CO2. It functions in the pathway cofactor biosynthesis; (R)-pantothenate biosynthesis; beta-alanine from L-aspartate: step 1/1. In terms of biological role, catalyzes the pyruvoyl-dependent decarboxylation of aspartate to produce beta-alanine. The chain is Aspartate 1-decarboxylase from Synechocystis sp. (strain ATCC 27184 / PCC 6803 / Kazusa).